We begin with the raw amino-acid sequence, 334 residues long: Protein CUP-SHAPED COTYLEDON 3 (334 aa).

The region spanning 22–171 is the NAC domain; the sequence is LPPGFRFHPT…EWVICRVFNK (150 aa). A DNA-binding region spans residues 121–177; it reads VGMKKTLVFYKGRAPRGLKTKWVMHEYRLENDHSHRHTCKEEWVICRVFNKTGDRKN.

In a general manner, present at the boundaries between mersitems and araising primordia.

The protein localises to the nucleus. Functionally, transcription activator. Involved in molecular mechanisms regulating shoot apical meristem (SAM) formation during embryogenesis and organ separation. Required for axillary meristem initiation and separation of the meristem from the main stem. May act as an inhibitor of cell division. The protein is Protein CUP-SHAPED COTYLEDON 3 (NAC031) of Arabidopsis thaliana (Mouse-ear cress).